A 369-amino-acid polypeptide reads, in one-letter code: Phosphoribosyl pyrophosphate synthase-associated protein 2 (369 aa).

Methionine 1 carries the post-translational modification N-acetylmethionine. Phosphoserine occurs at positions 219, 227, and 233.

Belongs to the ribose-phosphate pyrophosphokinase family. In terms of assembly, binds to PRPS1 and PRPS2.

Its function is as follows. Seems to play a negative regulatory role in 5-phosphoribose 1-diphosphate synthesis. The sequence is that of Phosphoribosyl pyrophosphate synthase-associated protein 2 (Prpsap2) from Mus musculus (Mouse).